A 366-amino-acid polypeptide reads, in one-letter code: Probable quinol oxidase subunit 2 (366 aa).

Residues Met-1 to Gly-19 form the signal peptide. Cys-20 carries the N-palmitoyl cysteine lipid modification. Cys-20 carries S-diacylglycerol cysteine lipidation. The next 2 membrane-spanning stretches (helical) occupy residues Phe-38–Phe-58 and Ala-80–Pro-100. Positions Glu-330 to His-366 are disordered. Basic and acidic residues predominate over residues Glu-335–His-366.

The protein belongs to the cytochrome c oxidase subunit 2 family.

It localises to the cell membrane. It carries out the reaction 2 a quinol + O2 = 2 a quinone + 2 H2O. Functionally, catalyzes quinol oxidation with the concomitant reduction of oxygen to water. Subunit II transfers the electrons from a quinol to the binuclear center of the catalytic subunit I. The sequence is that of Probable quinol oxidase subunit 2 (qoxA) from Staphylococcus aureus (strain bovine RF122 / ET3-1).